The chain runs to 102 residues: Small ribosomal subunit protein uS10 (102 aa).

Residues 37–61 (PIPLPTKSLKITTRKSTDGEGSSSF) form a disordered region.

This sequence belongs to the universal ribosomal protein uS10 family. As to quaternary structure, part of the 30S ribosomal subunit.

Involved in the binding of tRNA to the ribosomes. This Methanococcus vannielii (strain ATCC 35089 / DSM 1224 / JCM 13029 / OCM 148 / SB) protein is Small ribosomal subunit protein uS10.